Consider the following 263-residue polypeptide: Putative alpha/beta hydrolase L404 (263 aa).

Gly-2 carries the N-myristoyl glycine; by host lipid modification.

This sequence belongs to the AB hydrolase superfamily.

The chain is Putative alpha/beta hydrolase L404 from Acanthamoeba polyphaga (Amoeba).